A 1217-amino-acid polypeptide reads, in one-letter code: ATP-dependent helicase/nuclease subunit A (1217 aa).

In terms of domain architecture, UvrD-like helicase ATP-binding spans 10-475; that stretch reads VIWTDAQWQS…IDLSQNFRSR (466 aa). ATP is bound at residue 31 to 38; that stretch reads AAAGSGKT. Residues 476 to 786 form the UvrD-like helicase C-terminal domain; that stretch reads KEVLSTTNYI…RMMTIHSSKG (311 aa).

It belongs to the helicase family. AddA subfamily. In terms of assembly, heterodimer of AddA and AddB/RexB. Mg(2+) serves as cofactor.

It catalyses the reaction Couples ATP hydrolysis with the unwinding of duplex DNA by translocating in the 3'-5' direction.. The catalysed reaction is ATP + H2O = ADP + phosphate + H(+). In terms of biological role, the heterodimer acts as both an ATP-dependent DNA helicase and an ATP-dependent, dual-direction single-stranded exonuclease. Recognizes the chi site generating a DNA molecule suitable for the initiation of homologous recombination. The AddA nuclease domain is required for chi fragment generation; this subunit has the helicase and 3' -&gt; 5' nuclease activities. The protein is ATP-dependent helicase/nuclease subunit A of Staphylococcus aureus (strain Mu3 / ATCC 700698).